Here is a 115-residue protein sequence, read N- to C-terminus: Hydrogenase maturation factor HypA (115 aa).

His-2 contributes to the Ni(2+) binding site. Residues Cys-74, Cys-77, Cys-90, and Cys-93 each coordinate Zn(2+).

It belongs to the HypA/HybF family.

Involved in the maturation of [NiFe] hydrogenases. Required for nickel insertion into the metal center of the hydrogenase. The chain is Hydrogenase maturation factor HypA from Desulfosudis oleivorans (strain DSM 6200 / JCM 39069 / Hxd3) (Desulfococcus oleovorans).